The sequence spans 1854 residues: Dystrophin, isoform D (1854 aa).

Disordered regions lie at residues 1 to 65 (MTTT…PIYA), 84 to 161 (GSTT…YEMP), 240 to 352 (QSPT…MSPA), 516 to 548 (LKPT…PTPS), 595 to 650 (TPGG…TSES), 716 to 740 (VMSK…PSTA), 783 to 830 (LKLQ…STTP), and 1012 to 1036 (VSDT…EQSR). 2 stretches are compositionally biased toward low complexity: residues 11–37 (QRQQ…QQHQ) and 84–96 (GSTT…LQSS). The span at 143–157 (GLSSAQPATSASSGN) shows a compositional bias: polar residues. Over residues 276–296 (QQQQQQQQAGINGQINGNGNQ) the composition is skewed to low complexity. 2 stretches are compositionally biased toward polar residues: residues 331–345 (TLSR…SSAD) and 518–536 (PTST…SNTA). Residues 595–606 (TPGGGVVGGQAA) are compositionally biased toward gly residues. A compositionally biased stretch (polar residues) spans 716-727 (VMSKSNSSLGSV). Composition is skewed to low complexity over residues 728 to 740 (TTPS…PSTA) and 783 to 814 (LKLQ…QQIQ). The span at 815-830 (NGFASDDNSSSCSTTP) shows a compositional bias: polar residues. Spectrin repeat units follow at residues 936–1069 (EHWN…RLDE) and 1072–1176 (TKMR…VLCQ). Positions 1179–1209 (AQQTHENGDDGRTTSNSGTIGPLPNLGQSVK) are disordered. Residues 1206–1239 (QSVKPPWERATTAANVPYYIDHERETTHWDHPEM) enclose the WW domain. The ZZ-type zinc finger occupies 1464–1520 (KHQAKCNICKEYPIVGFRYRCLKCFNFDMCQKCFFFGRNAKNHKLTHPMHEYCTTTT). Zn(2+)-binding residues include cysteine 1469, cysteine 1472, cysteine 1484, cysteine 1487, cysteine 1493, cysteine 1496, histidine 1506, and histidine 1510. A Phosphoserine modification is found at serine 1564. 2 disordered regions span residues 1673–1701 (EQSG…GEQG) and 1744–1854 (DEPN…ELQK). 2 stretches are compositionally biased toward polar residues: residues 1682–1694 (NGMQ…MTGL) and 1765–1796 (ALNS…QQNG). The span at 1815–1826 (QELESINDDLED) shows a compositional bias: acidic residues. A compositionally biased stretch (low complexity) spans 1827-1845 (SSSSNTTNTTTTTTTTATT).

As to quaternary structure, component of the dystrophin associated protein complex (DAPC). Interacts with Dg, via the Dg WW domain binding sites. As to expression, during embryogenesis and in third instar larvae, expression is seen in pericardial cells of the dorsal vessel and in the ventral nerve cord. Expression is absent from both the embryonic and larval musculature.

The protein resides in the cell membrane. Its subcellular location is the sarcolemma. It is found in the cytoplasm. It localises to the cytoskeleton. Its function is as follows. Required for the maintenance of appropriate synaptic retrograde communication and the stabilization of muscle cell architecture or physiology. May play a role in anchoring the cytoskeleton to the plasma membrane. This Drosophila melanogaster (Fruit fly) protein is Dystrophin, isoform D (Dys).